The chain runs to 148 residues: UPF0260 protein YE2365 (148 aa).

It belongs to the UPF0260 family.

This is UPF0260 protein YE2365 from Yersinia enterocolitica serotype O:8 / biotype 1B (strain NCTC 13174 / 8081).